The sequence spans 197 residues: Peptidyl-tRNA hydrolase (197 aa).

Tyr18 contacts tRNA. The active-site Proton acceptor is His23. Tyr68, Asn70, and Asn116 together coordinate tRNA.

The protein belongs to the PTH family. Monomer.

The protein localises to the cytoplasm. The catalysed reaction is an N-acyl-L-alpha-aminoacyl-tRNA + H2O = an N-acyl-L-amino acid + a tRNA + H(+). Hydrolyzes ribosome-free peptidyl-tRNAs (with 1 or more amino acids incorporated), which drop off the ribosome during protein synthesis, or as a result of ribosome stalling. In terms of biological role, catalyzes the release of premature peptidyl moieties from peptidyl-tRNA molecules trapped in stalled 50S ribosomal subunits, and thus maintains levels of free tRNAs and 50S ribosomes. In Desulfotalea psychrophila (strain LSv54 / DSM 12343), this protein is Peptidyl-tRNA hydrolase.